Consider the following 215-residue polypeptide: UPF0056 membrane protein YhcE (215 aa).

Helical transmembrane passes span 14–34 (FFIG…FISM), 54–74 (VAII…LFGI), 81–101 (IAGG…KLGE), 120–140 (VVPL…TIVW), 147–167 (ISYL…CWGL), and 189–209 (IMGL…IKGI).

Belongs to the UPF0056 (MarC) family.

Its subcellular location is the cell membrane. This chain is UPF0056 membrane protein YhcE (ychE), found in Escherichia coli (strain K12).